The chain runs to 134 residues: Profilin-2 (134 aa).

A disulfide bond links Cys-13 and Cys-118. Positions 84–100 (AVIRGKKGSGGITIKET) match the Involved in PIP2 interaction motif. Position 114 is a phosphothreonine (Thr-114).

This sequence belongs to the profilin family. As to quaternary structure, occurs in many kinds of cells as a complex with monomeric actin in a 1:1 ratio. Post-translationally, phosphorylated by MAP kinases.

The protein resides in the cytoplasm. It localises to the cytoskeleton. In terms of biological role, binds to actin and affects the structure of the cytoskeleton. At high concentrations, profilin prevents the polymerization of actin, whereas it enhances it at low concentrations. The protein is Profilin-2 of Olea europaea (Common olive).